The chain runs to 68 residues: Neuronal regeneration-related protein (68 aa).

Residues 42–68 (EETGAASLTPPGSREFTSPATSYLHPF) are disordered.

Interacts with FLNA. Interacts with the latency-associated peptides (LAP) of TGFB1 and TGFB2; the interaction results in a decrease in TGFB autoinduction. Post-translationally, phosphorylated on Ser-59. Phosphorylation decreases stability and activity. As to expression, expressed in brain and fetal lung.

It is found in the cytoplasm. Functionally, may have roles in cellular differentiation. Ectopic expression induces differentiation of fibroblast into myofibroblast and myofibroblast ameboid migration. Increases retinoic-acid regulation of lipid-droplet biogenesis. May also have neural functions. Promotes axonal regeneration and augments motility of gliomas. Down-regulates the expression of TGFB1 and TGFB2 but not of TGFB3. May play a role in the regulation of alveolar generation. In Mus musculus (Mouse), this protein is Neuronal regeneration-related protein (Nrep).